A 362-amino-acid chain; its full sequence is Histidinol-phosphate aminotransferase (362 aa).

Lys-218 carries the N6-(pyridoxal phosphate)lysine modification.

This sequence belongs to the class-II pyridoxal-phosphate-dependent aminotransferase family. Histidinol-phosphate aminotransferase subfamily. As to quaternary structure, homodimer. The cofactor is pyridoxal 5'-phosphate.

The catalysed reaction is L-histidinol phosphate + 2-oxoglutarate = 3-(imidazol-4-yl)-2-oxopropyl phosphate + L-glutamate. Its pathway is amino-acid biosynthesis; L-histidine biosynthesis; L-histidine from 5-phospho-alpha-D-ribose 1-diphosphate: step 7/9. The sequence is that of Histidinol-phosphate aminotransferase from Xanthomonas campestris pv. campestris (strain 8004).